The following is an 807-amino-acid chain: cAMP-regulated phosphoprotein 21 (807 aa).

The disordered stretch occupies residues 1-127 (MSEQGGLTPT…KNREKLSERP (127 aa)). N-acetylserine is present on S2. S32 carries the phosphoserine modification. Positions 32 to 57 (SLDEEEKLELQRRLAAQNQERRKSKS) form a coiled coil. Phosphoserine; by PKA is present on S55. The segment covering 89–98 (IHLQLSSFPS) has biased composition (polar residues). The span at 101-127 (EEDKSRKDDSEREKEKDKNREKLSERP) shows a compositional bias: basic and acidic residues. S133 carries the phosphoserine modification. Residues 163 to 226 (RMILLKMEQE…SVIINKTSST (64 aa)) form the R3H domain. Residues 227 to 298 (RIPEQRFCEH…VRERIFAHDS (72 aa)) enclose the SUZ domain. The disordered stretch occupies residues 245–282 (SQKRFILKRDNSSIDKEDNQNRMHPFRDDRRSKSIEER). 2 positions are modified to phosphoserine: N265 and S298. Disordered regions lie at residues 328 to 434 (LFRA…TSSV), 474 to 536 (GSIL…QPQM), 552 to 576 (SQLS…YPAS), and 595 to 627 (QLST…QQPP). Over residues 337–348 (GRTSGSRQSSSE) the composition is skewed to low complexity. Positions 349-358 (TELRWPDHQR) are enriched in basic and acidic residues. Positions 359 to 380 (AWSSTDSDSSNRNLKPTMTKTA) are enriched in polar residues. Residues S361 and S381 each carry the phosphoserine modification. The span at 401–421 (GKLSKTGSESSSSAGSSGSLS) shows a compositional bias: low complexity. A compositionally biased stretch (polar residues) spans 422–434 (RTHPQSTALTSSV). Pro residues predominate over residues 514-524 (QQPPQQQPSPQ). The segment covering 525–535 (PQQQVQASQPQ) has biased composition (low complexity). Polar residues-rich tracts occupy residues 552–563 (SQLSMSRQSSGD) and 595–613 (QLST…QQVL). Residue S557 is modified to Phosphoserine. R650 carries the asymmetric dimethylarginine modification.

Interacts with CALM1. In terms of processing, phosphorylation of isoform 2 at Ser-55 is enhanced upon dopamine D1 receptor activation and favors interaction with CALM1. Post-translationally, methylated by CARM1 at Arg-650 in immature thymocytes. As to expression, present at high levels in thymus and low levels in brain. In thymus, isoform 1 is specifically found in immature thymocytes (at protein level).

The protein localises to the cytoplasm. In terms of biological role, may act as a competitive inhibitor of calmodulin-dependent enzymes such as calcineurin in neurons. This chain is cAMP-regulated phosphoprotein 21 (Arpp21), found in Mus musculus (Mouse).